The following is a 215-amino-acid chain: Cytochrome b6 (215 aa).

Residues 32 to 52 form a helical membrane-spanning segment; that stretch reads IFYCLGGIVFVSFLIQVATGF. Cys-35 serves as a coordination point for heme c. The heme b site is built by His-86 and His-100. Helical transmembrane passes span 90 to 110, 116 to 136, and 186 to 206; these read ASMM…TGGF, LTWV…VTGY, and LHTF…FLMI. Residues His-187 and His-202 each contribute to the heme b site.

This sequence belongs to the cytochrome b family. PetB subfamily. In terms of assembly, the 4 large subunits of the cytochrome b6-f complex are cytochrome b6, subunit IV (17 kDa polypeptide, PetD), cytochrome f and the Rieske protein, while the 4 small subunits are PetG, PetL, PetM and PetN. The complex functions as a dimer. The cofactor is heme b. Heme c is required as a cofactor.

It localises to the plastid. Its subcellular location is the chloroplast thylakoid membrane. Functionally, component of the cytochrome b6-f complex, which mediates electron transfer between photosystem II (PSII) and photosystem I (PSI), cyclic electron flow around PSI, and state transitions. The chain is Cytochrome b6 from Porphyra purpurea (Red seaweed).